The following is a 445-amino-acid chain: Phosphoglucosamine mutase (445 aa).

Ser-102 acts as the Phosphoserine intermediate in catalysis. Residues Ser-102, Asp-241, Asp-243, and Asp-245 each coordinate Mg(2+). Position 102 is a phosphoserine (Ser-102).

This sequence belongs to the phosphohexose mutase family. Mg(2+) is required as a cofactor. Post-translationally, activated by phosphorylation.

The catalysed reaction is alpha-D-glucosamine 1-phosphate = D-glucosamine 6-phosphate. Catalyzes the conversion of glucosamine-6-phosphate to glucosamine-1-phosphate. The protein is Phosphoglucosamine mutase of Shigella boydii serotype 4 (strain Sb227).